The sequence spans 359 residues: Dihydroorotate dehydrogenase (quinone) (359 aa).

Residues 65–69 (AGLDK) and T89 contribute to the FMN site. Substrate is bound at residue K69. 114-118 (NRLGF) contributes to the substrate binding site. FMN-binding residues include N149 and N182. N182 contributes to the substrate binding site. S185 acts as the Nucleophile in catalysis. N187 contacts substrate. FMN is bound by residues K233 and T261. 262–263 (NT) lines the substrate pocket. Residues G284, G313, and 334–335 (YT) contribute to the FMN site.

This sequence belongs to the dihydroorotate dehydrogenase family. Type 2 subfamily. In terms of assembly, monomer. FMN serves as cofactor.

The protein localises to the cell membrane. The catalysed reaction is (S)-dihydroorotate + a quinone = orotate + a quinol. It functions in the pathway pyrimidine metabolism; UMP biosynthesis via de novo pathway; orotate from (S)-dihydroorotate (quinone route): step 1/1. Functionally, catalyzes the conversion of dihydroorotate to orotate with quinone as electron acceptor. In Paracidovorax citrulli (strain AAC00-1) (Acidovorax citrulli), this protein is Dihydroorotate dehydrogenase (quinone).